We begin with the raw amino-acid sequence, 212 residues long: Urease accessory protein UreG 2 (212 aa).

Residue 11–18 coordinates GTP; sequence GPVGSGKM.

The protein belongs to the SIMIBI class G3E GTPase family. UreG subfamily. As to quaternary structure, homodimer. UreD, UreF and UreG form a complex that acts as a GTP-hydrolysis-dependent molecular chaperone, activating the urease apoprotein by helping to assemble the nickel containing metallocenter of UreC. The UreE protein probably delivers the nickel.

It is found in the cytoplasm. Functionally, facilitates the functional incorporation of the urease nickel metallocenter. This process requires GTP hydrolysis, probably effectuated by UreG. Its function is as follows. Disrupting the ure2 operon has no effect on urease activity, or pathogen survival in BALB/c mice when inoculated by gavage, but confers slightly enhanced resistance to low pH killing in vitro. The sequence is that of Urease accessory protein UreG 2 from Brucella suis biovar 1 (strain 1330).